We begin with the raw amino-acid sequence, 224 residues long: ATP-dependent Clp protease proteolytic subunit 1 (224 aa).

S120 acts as the Nucleophile in catalysis. Residue H145 is part of the active site.

The protein belongs to the peptidase S14 family. Fourteen ClpP subunits assemble into 2 heptameric rings which stack back to back to give a disk-like structure with a central cavity, resembling the structure of eukaryotic proteasomes.

It localises to the cytoplasm. It catalyses the reaction Hydrolysis of proteins to small peptides in the presence of ATP and magnesium. alpha-casein is the usual test substrate. In the absence of ATP, only oligopeptides shorter than five residues are hydrolyzed (such as succinyl-Leu-Tyr-|-NHMec, and Leu-Tyr-Leu-|-Tyr-Trp, in which cleavage of the -Tyr-|-Leu- and -Tyr-|-Trp bonds also occurs).. Its function is as follows. Cleaves peptides in various proteins in a process that requires ATP hydrolysis. Has a chymotrypsin-like activity. Plays a major role in the degradation of misfolded proteins. The polypeptide is ATP-dependent Clp protease proteolytic subunit 1 (Prochlorococcus marinus (strain MIT 9313)).